Consider the following 608-residue polypeptide: Coilin (608 aa).

Positions 134–272 (KETGGYESES…RKKAKRQWLR (139 aa)) are disordered. Positions 141 to 155 (SESEEDELEEEAEEF) are enriched in acidic residues. The span at 161 to 179 (ASKKRKTSSKNQSTKRKKC) shows a compositional bias: basic residues. The Nuclear localization signal 1 signature appears at 163-170 (KKRKTSSK). Residue S187 is modified to Phosphoserine. The segment covering 211 to 228 (DVQSANNDEQNNDSTKPM) has biased composition (polar residues). Residues 235 to 245 (SQQEESKEHND) show a composition bias toward basic and acidic residues. The Nuclear localization signal 2 signature appears at 253–260 (TKKTPSRS). The segment covering 256 to 269 (TPSRSARRKKAKRQ) has biased composition (basic residues). In terms of domain architecture, Tudor; atypical spans 410–510 (YEQLVAYTGS…LLDVRSVKTS (101 aa)). The interval 513-585 (DSAEVAKSAL…KKGSSSGGSW (73 aa)) is disordered. Residues 558 to 585 (EALSAKKAALSQANNGWNKKGSSSGGSW) are compositionally biased toward low complexity.

It belongs to the coilin family. As to quaternary structure, homooligomer. Interaction with RNA results in multimerization due to structural alteration in the NOD domain.

It is found in the nucleus. It localises to the cajal body. In terms of biological role, probable component of nuclear coiled bodies, also known as Cajal bodies or CBs, which are involved in the modification and assembly of nucleoplasmic snRNPs. Required for CBs formation. Binds snRNAs and non-specific artificial RNA via the N-terminal part of the NOD domain and via the NLS2 region (212-282) of the IDD domain. The two sites are able to function independently and provide effective RNA-binding in a non-cooperative manner. The sequence is that of Coilin from Arabidopsis thaliana (Mouse-ear cress).